The sequence spans 489 residues: Zinc finger protein 772 (489 aa).

One can recognise a KRAB domain in the interval 27–98 (VNFEDVFVYF…DWVDMTLAVA (72 aa)). C2H2-type zinc fingers lie at residues 144-166 (YPCG…QETH), 172-194 (YMCV…QKQH), 266-288 (YKCS…QRVH), 294-316 (YECG…QRIH), 322-344 (YECG…QRVH), 350-372 (YKCS…ESIH), 378-400 (YECS…WSVH), 406-428 (YECI…QRVH), 434-456 (YVCS…HRIH), and 462-484 (YKCS…WKIH).

The protein belongs to the krueppel C2H2-type zinc-finger protein family.

It is found in the nucleus. In terms of biological role, may be involved in transcriptional regulation. This chain is Zinc finger protein 772 (ZNF772), found in Homo sapiens (Human).